We begin with the raw amino-acid sequence, 197 residues long: MKIKSSEFIISAVKREQYPDDNLPEIAFVGRSNVGKSSIINSLTNRRGLAKVSQTPGKTRLINFFLLNKDFYLVDLPGYGYAKVSKKEKASWGATIERYLLNRGPLKKVVLLVDCRHKPTADDVQMYEWIKHYGYEVVVIATKSDKISNNQIGKSEKLIKETLGLPKDYKLKFFSSLNKKGKDELVDYLFDDLVEEI.

One can recognise an EngB-type G domain in the interval 22 to 195; the sequence is NLPEIAFVGR…VDYLFDDLVE (174 aa). GTP contacts are provided by residues 30–37, 57–61, 75–78, 142–145, and 174–176; these read GRSNVGKS, GKTRL, DLPG, TKSD, and FSS. Mg(2+) is bound by residues serine 37 and threonine 59.

It belongs to the TRAFAC class TrmE-Era-EngA-EngB-Septin-like GTPase superfamily. EngB GTPase family. Requires Mg(2+) as cofactor.

In terms of biological role, necessary for normal cell division and for the maintenance of normal septation. This is Probable GTP-binding protein EngB from Clostridium perfringens (strain SM101 / Type A).